Here is a 307-residue protein sequence, read N- to C-terminus: MEARAGLAMQSRAAVGVGAGPGVGRRGRAVIRVGKRPTAASLRVGGPAGPAAAKPLAPLYCLKASRGHDSLHNSVDEALLLKRKSEEVLFYLNGRCIYLVGMMGSGKSTVAKILAEVLGYSFFDSDKLVEQAVGMPSVAQIFKEHSEAFFRDNESSVLRDLSSMRRLVVATGGGAVIRPVNWKYMKKGLSVWLDVPLDALARRIAQVGTASRPLLDQPSSDPYTAAFSKLSMLAEQRGDAYANADARVSLEEIAAKQGHDDVSKLTPTDIAIEALLKIENFVTEHSTSSGPVGDLIVDSQNRRTKAL.

The transit peptide at 1–60 directs the protein to the chloroplast; it reads MEARAGLAMQSRAAVGVGAGPGVGRRGRAVIRVGKRPTAASLRVGGPAGPAAAKPLAPLY. 101-108 contacts ATP; the sequence is GMMGSGKS. Ser108 contacts Mg(2+). Residues Asp126, Arg151, and Gly173 each coordinate substrate. Residue Arg212 participates in ATP binding. Residues 285–307 are disordered; sequence HSTSSGPVGDLIVDSQNRRTKAL.

Belongs to the shikimate kinase family. Mg(2+) is required as a cofactor. As to expression, expressed in panicles.

It is found in the plastid. Its subcellular location is the chloroplast. The enzyme catalyses shikimate + ATP = 3-phosphoshikimate + ADP + H(+). Its pathway is metabolic intermediate biosynthesis; chorismate biosynthesis; chorismate from D-erythrose 4-phosphate and phosphoenolpyruvate: step 5/7. Functionally, catalyzes the specific phosphorylation of the 3-hydroxyl group of shikimic acid using ATP as a cosubstrate. This Oryza sativa subsp. japonica (Rice) protein is Shikimate kinase 2, chloroplastic (SK2).